Reading from the N-terminus, the 194-residue chain is Small ribosomal subunit protein uS4c (194 aa).

The 61-residue stretch at 84–144 (MRLDTLLYRT…KEILKSLNDK (61 aa)) folds into the S4 RNA-binding domain.

The protein belongs to the universal ribosomal protein uS4 family. In terms of assembly, part of the 30S ribosomal subunit. Contacts protein S5. The interaction surface between S4 and S5 is involved in control of translational fidelity.

It is found in the plastid. The protein localises to the chloroplast. Functionally, one of the primary rRNA binding proteins, it binds directly to 16S rRNA where it nucleates assembly of the body of the 30S subunit. In terms of biological role, with S5 and S12 plays an important role in translational accuracy. The sequence is that of Small ribosomal subunit protein uS4c (rps4) from Bigelowiella natans (Pedinomonas minutissima).